Here is a 224-residue protein sequence, read N- to C-terminus: uncharacterized protein (224 aa).

An N-terminal signal peptide occupies residues 1–17 (MFTILLYFLVLFWVTNA).

This is an uncharacterized protein from Caenorhabditis elegans.